The sequence spans 149 residues: Small ribosomal subunit protein uS19 (149 aa).

This sequence belongs to the universal ribosomal protein uS19 family.

Its function is as follows. Protein S19 forms a complex with S13 that binds strongly to the 16S ribosomal RNA. The chain is Small ribosomal subunit protein uS19 from Methanopyrus kandleri (strain AV19 / DSM 6324 / JCM 9639 / NBRC 100938).